A 32-amino-acid polypeptide reads, in one-letter code: ilv operon leader peptide (32 aa).

Its function is as follows. This protein is involved in control of the biosynthesis of isoleucine, leucine, and valine. The sequence is that of ilv operon leader peptide (ivbL) from Escherichia coli (strain K12).